The following is a 132-amino-acid chain: Secreted RxLR effector protein RXLR-C22 (132 aa).

A signal peptide spans 1–21 (MRSLVWAVIATLIVLTPFSEA). Positions 56-74 (RKLQSDSVKKGDSTGLEER) match the RxLR-dEER motif. An N-linked (GlcNAc...) asparagine glycan is attached at N116.

Belongs to the RxLR effector family.

The protein resides in the secreted. Its subcellular location is the host Golgi apparatus. Secreted effector that does not suppress pattern-triggered immunity (PTI) in plant host. This Plasmopara halstedii (Downy mildew of sunflower) protein is Secreted RxLR effector protein RXLR-C22.